The primary structure comprises 134 residues: Large ribosomal subunit protein uL22 (134 aa).

It belongs to the universal ribosomal protein uL22 family. In terms of assembly, part of the 50S ribosomal subunit.

Functionally, this protein binds specifically to 23S rRNA; its binding is stimulated by other ribosomal proteins, e.g. L4, L17, and L20. It is important during the early stages of 50S assembly. It makes multiple contacts with different domains of the 23S rRNA in the assembled 50S subunit and ribosome. The globular domain of the protein is located near the polypeptide exit tunnel on the outside of the subunit, while an extended beta-hairpin is found that lines the wall of the exit tunnel in the center of the 70S ribosome. This chain is Large ribosomal subunit protein uL22, found in Porphyromonas gingivalis (strain ATCC 33277 / DSM 20709 / CIP 103683 / JCM 12257 / NCTC 11834 / 2561).